Consider the following 299-residue polypeptide: ATP phosphoribosyltransferase (299 aa).

It belongs to the ATP phosphoribosyltransferase family. Long subfamily. Requires Mg(2+) as cofactor.

Its subcellular location is the cytoplasm. It catalyses the reaction 1-(5-phospho-beta-D-ribosyl)-ATP + diphosphate = 5-phospho-alpha-D-ribose 1-diphosphate + ATP. It functions in the pathway amino-acid biosynthesis; L-histidine biosynthesis; L-histidine from 5-phospho-alpha-D-ribose 1-diphosphate: step 1/9. Feedback inhibited by histidine. Its function is as follows. Catalyzes the condensation of ATP and 5-phosphoribose 1-diphosphate to form N'-(5'-phosphoribosyl)-ATP (PR-ATP). Has a crucial role in the pathway because the rate of histidine biosynthesis seems to be controlled primarily by regulation of HisG enzymatic activity. This is ATP phosphoribosyltransferase from Rhodopirellula baltica (strain DSM 10527 / NCIMB 13988 / SH1).